Reading from the N-terminus, the 119-residue chain is Small ribosomal subunit protein uS13 (119 aa).

The tract at residues 93–119 is disordered; that stretch reads RRGLPLRGQRTRSNARTRKGKRKPIRS.

This sequence belongs to the universal ribosomal protein uS13 family. Part of the 30S ribosomal subunit. Forms a loose heterodimer with protein S19. Forms two bridges to the 50S subunit in the 70S ribosome.

Functionally, located at the top of the head of the 30S subunit, it contacts several helices of the 16S rRNA. In the 70S ribosome it contacts the 23S rRNA (bridge B1a) and protein L5 of the 50S subunit (bridge B1b), connecting the 2 subunits; these bridges are implicated in subunit movement. Contacts the tRNAs in the A and P-sites. This chain is Small ribosomal subunit protein uS13, found in Coxiella burnetii (strain RSA 493 / Nine Mile phase I).